The chain runs to 381 residues: Succinyl-diaminopimelate desuccinylase (381 aa).

A Zn(2+)-binding site is contributed by His-71. The active site involves Asp-73. Asp-104 provides a ligand contact to Zn(2+). Residue Glu-138 is the Proton acceptor of the active site. The Zn(2+) site is built by Glu-139, Glu-167, and His-353.

The protein belongs to the peptidase M20A family. DapE subfamily. In terms of assembly, homodimer. It depends on Zn(2+) as a cofactor. The cofactor is Co(2+).

The catalysed reaction is N-succinyl-(2S,6S)-2,6-diaminopimelate + H2O = (2S,6S)-2,6-diaminopimelate + succinate. It participates in amino-acid biosynthesis; L-lysine biosynthesis via DAP pathway; LL-2,6-diaminopimelate from (S)-tetrahydrodipicolinate (succinylase route): step 3/3. In terms of biological role, catalyzes the hydrolysis of N-succinyl-L,L-diaminopimelic acid (SDAP), forming succinate and LL-2,6-diaminopimelate (DAP), an intermediate involved in the bacterial biosynthesis of lysine and meso-diaminopimelic acid, an essential component of bacterial cell walls. This Shewanella halifaxensis (strain HAW-EB4) protein is Succinyl-diaminopimelate desuccinylase.